We begin with the raw amino-acid sequence, 312 residues long: Malate dehydrogenase (312 aa).

NAD(+) is bound by residues 7–13 (GAAGGIG) and D34. 2 residues coordinate substrate: R81 and R87. Residues N94 and 117–119 (ITN) contribute to the NAD(+) site. Substrate contacts are provided by N119 and R153. H177 serves as the catalytic Proton acceptor. M227 contributes to the NAD(+) binding site.

This sequence belongs to the LDH/MDH superfamily. MDH type 1 family. As to quaternary structure, homodimer.

It carries out the reaction (S)-malate + NAD(+) = oxaloacetate + NADH + H(+). Catalyzes the reversible oxidation of malate to oxaloacetate. This is Malate dehydrogenase from Escherichia fergusonii (strain ATCC 35469 / DSM 13698 / CCUG 18766 / IAM 14443 / JCM 21226 / LMG 7866 / NBRC 102419 / NCTC 12128 / CDC 0568-73).